Here is an 855-residue protein sequence, read N- to C-terminus: Valine--tRNA ligase (855 aa).

Residues 42-52 (PTISGKLHIGH) carry the 'HIGH' region motif. The 'KMSKS' region signature appears at 574 to 578 (KMSKS). Lys-577 lines the ATP pocket.

This sequence belongs to the class-I aminoacyl-tRNA synthetase family. ValS type 2 subfamily. In terms of assembly, monomer.

It localises to the cytoplasm. It carries out the reaction tRNA(Val) + L-valine + ATP = L-valyl-tRNA(Val) + AMP + diphosphate. Catalyzes the attachment of valine to tRNA(Val). As ValRS can inadvertently accommodate and process structurally similar amino acids such as threonine, to avoid such errors, it has a 'posttransfer' editing activity that hydrolyzes mischarged Thr-tRNA(Val) in a tRNA-dependent manner. In Wolbachia sp. subsp. Brugia malayi (strain TRS), this protein is Valine--tRNA ligase.